A 1484-amino-acid polypeptide reads, in one-letter code: DNA-directed RNA polymerase subunit beta' (1484 aa).

Residues C67, C69, C82, and C85 each coordinate Zn(2+). 3 residues coordinate Mg(2+): D499, D501, and D503. 4 residues coordinate Zn(2+): C867, C943, C950, and C953.

It belongs to the RNA polymerase beta' chain family. As to quaternary structure, the RNAP catalytic core consists of 2 alpha, 1 beta, 1 beta' and 1 omega subunit. When a sigma factor is associated with the core the holoenzyme is formed, which can initiate transcription. Requires Mg(2+) as cofactor. The cofactor is Zn(2+).

It carries out the reaction RNA(n) + a ribonucleoside 5'-triphosphate = RNA(n+1) + diphosphate. Functionally, DNA-dependent RNA polymerase catalyzes the transcription of DNA into RNA using the four ribonucleoside triphosphates as substrates. The sequence is that of DNA-directed RNA polymerase subunit beta' from Chlorobium phaeovibrioides (strain DSM 265 / 1930) (Prosthecochloris vibrioformis (strain DSM 265)).